The sequence spans 327 residues: S-adenosylmethionine/S-adenosylhomocysteine transporter (327 aa).

The next 10 helical transmembrane spans lie at 22–42 (CDMA…SFAL), 53–73 (LFVT…LLLC), 85–105 (IMPI…LEFI), 114–134 (TACF…YVQL), 143–163 (LGGL…GGSE), 165–185 (VAEW…ATCL), 202–222 (SLSM…LSLI), 240–260 (LFLQ…YNLF), 271–291 (FLSF…WLLL), and 294–314 (SFPP…RLIY). The region spanning 34-157 (FIWSSSFALS…LGLVSYLVYL (124 aa)) is the EamA 1 domain. Residues 189–313 (GWTLLRKLGR…GFMVLGCRLI (125 aa)) enclose the EamA 2 domain.

The protein belongs to the drug/metabolite transporter (DMT) superfamily. 10 TMS drug/metabolite exporter (DME) (TC 2.A.7.3) family.

Its subcellular location is the cell membrane. Its activity is regulated as follows. CCCP treatment reduces SAM intracellular uptake by 50%. Transports S-adenosylmethionine (SAM) and S-adenosylhomocysteine (SAH). Allows bacteria to acquire SAM from the eukaryotic host cell and to likely remove the toxic by-product SAH. The polypeptide is S-adenosylmethionine/S-adenosylhomocysteine transporter (Chlamydia trachomatis serovar L2 (strain ATCC VR-902B / DSM 19102 / 434/Bu)).